The primary structure comprises 40 residues: Large ribosomal subunit protein bL36A (40 aa).

It belongs to the bacterial ribosomal protein bL36 family.

This is Large ribosomal subunit protein bL36A from Kineococcus radiotolerans (strain ATCC BAA-149 / DSM 14245 / SRS30216).